A 156-amino-acid chain; its full sequence is Ribosomal RNA large subunit methyltransferase H (156 aa).

Residues L73, G104, and 123–128 (LSPLTL) each bind S-adenosyl-L-methionine.

The protein belongs to the RNA methyltransferase RlmH family. In terms of assembly, homodimer.

Its subcellular location is the cytoplasm. It carries out the reaction pseudouridine(1915) in 23S rRNA + S-adenosyl-L-methionine = N(3)-methylpseudouridine(1915) in 23S rRNA + S-adenosyl-L-homocysteine + H(+). In terms of biological role, specifically methylates the pseudouridine at position 1915 (m3Psi1915) in 23S rRNA. The chain is Ribosomal RNA large subunit methyltransferase H from Aliivibrio fischeri (strain MJ11) (Vibrio fischeri).